The following is a 237-amino-acid chain: MADS-box protein GGM13 (237 aa).

The region spanning 1–61 is the MADS-box domain; the sequence is MGRGKIEIKR…GKLFEYSSAS (61 aa). A K-box domain is found at 84-174; the sequence is NQHLYCEMTR…CRLLAEQQAA (91 aa).

In terms of tissue distribution, expression specific for female reproductive structures: strong at the adaxial base of the cupules, where ovules will later develop, then in the outermost cell layer of the nucellus, in the inner envelope, and in the inner half of the middle envelope at late stage of ovule development.

The protein resides in the nucleus. In terms of biological role, probable transcription factor. This is MADS-box protein GGM13 (GGM13) from Gnetum gnemon (Spanish joint-fir).